The sequence spans 260 residues: Ribosome maturation factor RimP (260 aa).

Residues 198-260 (QSLGILPPPP…RGDIDPIEGE (63 aa)) are disordered. Basic and acidic residues-rich tracts occupy residues 210 to 228 (AKTDPAKRGTPKPKLENGK) and 238 to 254 (NTKEHRLAAERLRRGDI).

The protein belongs to the RimP family.

It localises to the cytoplasm. Functionally, required for maturation of 30S ribosomal subunits. The sequence is that of Ribosome maturation factor RimP from Nitrobacter winogradskyi (strain ATCC 25391 / DSM 10237 / CIP 104748 / NCIMB 11846 / Nb-255).